A 961-amino-acid chain; its full sequence is MAAQRIRAANSSGLPRCKSEGTLIDLSEGFSETSFNDVKVPSPSALLVDNPTPFGNAKEVIAIKDYCPNNFTTLKFSKGDHLYVLDTSGGEWWYAHNTTEMGYIPSSYVQPLNYRNSTLSDSGMIDNLPDSPDEVAKELDLLGGWTDDQKQSGRPYSNNPFWNGVRTNPFLNGNAQPSMDELNPKSTVDLLLFDTGTSSFTESSSATTNSTGNIFDELPATNGIHLEQPVKRDNPFFRSKRSYSLSELSVLQAKSDAPPTSSFFTGLKSPAPEQFQSREDFRTAWLNHRKLARSCHDLDLLGQSPGWGQTQAVETNIVCKLDSSGGSVQLPDTSISIHVPEGHVAPGETQQISMKALLDPPLDLNSDRSTSISPVVEVKLSNLEVSTFIILEMKVSAEVKGDIFSKSTVVLQCLRSDSKEGPYAPIPLAYSYGDTIQVQLDNLEPCMYLAIVAQGSNILYPSTVWDFIHKRVTVGLYGPKHIHPSFKTVVTIFGHDCAPKTLLVTEVTRQAPSPAPVALQLWGKHQFILSRPQDLRVCMFSNMTNYDVKSNEQAKVVRGFQMKLGKVSRLIFSVISQNPNELSDFTLRVQVKDDQDTILTQFCVQTPQPPPKSAIKPSGQRRFLKKNEVGKIILSPFVVTTKYPTFQDRPVSSLKFGKLLKTVVRQNKSHYLLEYKKGDVVALLSEERIRLKGQLWTKEWYIGYYQGKVGLVHTKNVLVVGKARPSLFSGPELSTSVLLEQILRPCKFLTYIYASVRTLLMENISSWRAFADALGYGNLPLTFFCRAELDSEPERVASVLEKLKEDCNNPDNKDRKSFQKELVMALLKMDCQGLVVRLIQDFVLLTTAVEVAQRWRELAEKLAKVSKQQMDAYESPHRDRNGVVDSEAMWKPAYDFLLTWSHQIGDSYRDVIQELHIGLDKMKNPITRRWKHLTGTLILVNSLDILRAAAFSPADHDDFVI.

The 60-residue stretch at 55 to 114 folds into the SH3 1 domain; sequence GNAKEVIAIKDYCPNNFTTLKFSKGDHLYVLDTSGGEWWYAHNTTEMGYIPSSYVQPLNY. A phosphoserine mark is found at serine 131, serine 244, serine 249, serine 277, and serine 294. The 138-residue stretch at 315 to 452 folds into the ZU5 domain; it reads TNIVCKLDSS…LEPCMYLAIV (138 aa). A Phosphoserine modification is found at serine 635. One can recognise an SH3 2 domain in the interval 652-722; it reads SSLKFGKLLK…HTKNVLVVGK (71 aa).

In terms of assembly, homodimer or homooligomer. Interacts with DNM2, EPS15, clathrin, the adapter protein complex 2/AP-2 and TFRC. Interacts with the Rag GTPases RRAGA, RRAGB, RRAGC and RRAGD; the interaction is most probably direct, preferentially occurs with their inactive GDP-bound form and is negatively regulated by amino acids. In terms of processing, phosphorylated upon EGF stimulation. Phosphorylation prevents interaction with DNM2.

Its subcellular location is the membrane. The protein localises to the clathrin-coated pit. The protein resides in the cytoplasmic vesicle. It is found in the clathrin-coated vesicle. It localises to the nucleus. May function in transferrin receptor internalization at the plasma membrane through a cargo-specific control of clathrin-mediated endocytosis. Alternatively, may act as a negative regulator of the amino acid-induced TOR signaling by inhibiting the formation of active Rag GTPase complexes. Preferentially binds inactive Rag GTPase complexes and prevents their interaction with the mTORC1 complex inhibiting its relocalization to lysosomes and its activation. Thereby, may indirectly regulate cell growth, proliferation and autophagy. The sequence is that of SH3 domain-binding protein 4 (Sh3bp4) from Rattus norvegicus (Rat).